The chain runs to 689 residues: MNFENLLIELGTEELPPKSLRKLAESFLANFTEELTKADLAFSSAVWYAAPRRLAINVTELALAQADKVVEKRGPAVSSAFDAEGKPTKAAEGWARGNGITVEQAERLVTDKGEWLVHNAKVEGVETKSLIAAMAQRALDKLPIPKPMRWGNNKTQFIRPVHTATILLGSELIEGELLGIKSARTVRGHRFMGLKQFELAHADHYLADLKEKGKVIADYESRKALIKADAEKAAAKIGGTADIEDSLLEEVASLVEWPVVLTASFEEKFLSVPSEALVYTMKGDQKYFPVFDNAGKLLPNFIFVANIESKDPAQIISGNEKVVRPRLADAEFFFNTDKKHTLESRLPSLETVLFQQQLGTLKDKVNRISALAAFIAEQTGANAVDAARAGLLSKTDLMTNMVMEFTDTQGTMGMHYARLDGETEAVAVAMEEQYKPKFSGDTVPSAGVSCAVALADKLDTLVGIFGIGQAPKGAADPFALRRAAIGVLRIIVENKLPLDLVTLIAKAQELHGTHLSNANASDEVLEFLMARFRAWYQDKGIGVDVILAVLARRPTRPADFDSRINAVSHFRSLEASGALAAANKRVSNILAKVEGALPTTIDASLLTEAAEQALAAKLNELQPQLAPLFANADYQQALTLLAGLRESVDQFFEDVMVMADDEALKNNRLALLNNLREQFLHVADISLLQ.

It belongs to the class-II aminoacyl-tRNA synthetase family. As to quaternary structure, tetramer of two alpha and two beta subunits.

It localises to the cytoplasm. The catalysed reaction is tRNA(Gly) + glycine + ATP = glycyl-tRNA(Gly) + AMP + diphosphate. In Shewanella putrefaciens (strain CN-32 / ATCC BAA-453), this protein is Glycine--tRNA ligase beta subunit.